The following is a 99-amino-acid chain: Plastocyanin A'/A'' (99 aa).

The region spanning 1–99 (IEVLLGSDDG…AGMVGKVTVN (99 aa)) is the Plastocyanin-like domain. Cu cation contacts are provided by H37, C84, H87, and M92.

The protein belongs to the plastocyanin family. Cu(2+) serves as cofactor.

It localises to the plastid. Its subcellular location is the chloroplast thylakoid membrane. In terms of biological role, participates in electron transfer between P700 and the cytochrome b6-f complex in photosystem I. The polypeptide is Plastocyanin A'/A'' (Nicotiana tabacum (Common tobacco)).